The following is a 707-amino-acid chain: UvrABC system protein C (707 aa).

The GIY-YIG domain occupies A14–V94. The region spanning G206 to S241 is the UVR domain. Positions D655–A707 are disordered. Composition is skewed to low complexity over residues A660–G670 and A677–E689. Over residues A690–A707 the composition is skewed to acidic residues.

Belongs to the UvrC family. In terms of assembly, interacts with UvrB in an incision complex.

The protein localises to the cytoplasm. The UvrABC repair system catalyzes the recognition and processing of DNA lesions. UvrC both incises the 5' and 3' sides of the lesion. The N-terminal half is responsible for the 3' incision and the C-terminal half is responsible for the 5' incision. This is UvrABC system protein C from Anaeromyxobacter dehalogenans (strain 2CP-1 / ATCC BAA-258).